The primary structure comprises 88 residues: Putative membrane protein insertion efficiency factor (88 aa).

This sequence belongs to the UPF0161 family.

It localises to the cell inner membrane. Could be involved in insertion of integral membrane proteins into the membrane. This Burkholderia vietnamiensis (strain G4 / LMG 22486) (Burkholderia cepacia (strain R1808)) protein is Putative membrane protein insertion efficiency factor.